Here is a 336-residue protein sequence, read N- to C-terminus: uncharacterized protein (336 aa).

Disordered regions lie at residues 29–93 and 116–147; these read GGVS…HSGA and LQER…GVTG. 2 stretches are compositionally biased toward polar residues: residues 70-82 and 125-141; these read SGGS…TSTA and PWRT…SQPH.

This is an uncharacterized protein from Bos taurus (Bovine).